Reading from the N-terminus, the 389-residue chain is Chaperone protein DnaJ (389 aa).

Residues 5–79 (KRDYYEVLGI…RKLYDQFGHE (75 aa)) form the J domain. The CR-type zinc finger occupies 151 to 234 (GCNKTIKYER…CRSNKYTVTN (84 aa)). Cysteine 164, cysteine 167, cysteine 182, cysteine 185, cysteine 208, cysteine 211, cysteine 222, and cysteine 225 together coordinate Zn(2+). CXXCXGXG motif repeat units follow at residues 164–171 (CHSCNGFG), 182–189 (CKDCNGNG), 208–215 (CSTCNGQG), and 222–229 (CKTCRSNK).

It belongs to the DnaJ family. Homodimer. Zn(2+) is required as a cofactor.

The protein resides in the cytoplasm. Its function is as follows. Participates actively in the response to hyperosmotic and heat shock by preventing the aggregation of stress-denatured proteins and by disaggregating proteins, also in an autonomous, DnaK-independent fashion. Unfolded proteins bind initially to DnaJ; upon interaction with the DnaJ-bound protein, DnaK hydrolyzes its bound ATP, resulting in the formation of a stable complex. GrpE releases ADP from DnaK; ATP binding to DnaK triggers the release of the substrate protein, thus completing the reaction cycle. Several rounds of ATP-dependent interactions between DnaJ, DnaK and GrpE are required for fully efficient folding. Also involved, together with DnaK and GrpE, in the DNA replication of plasmids through activation of initiation proteins. The polypeptide is Chaperone protein DnaJ (Mycoplasma genitalium (strain ATCC 33530 / DSM 19775 / NCTC 10195 / G37) (Mycoplasmoides genitalium)).